We begin with the raw amino-acid sequence, 150 residues long: uncharacterized protein (150 aa).

The protein localises to the plastid. The protein resides in the chloroplast. This is an uncharacterized protein from Pyropia yezoensis (Susabi-nori).